The sequence spans 248 residues: Prepilin leader peptidase/N-methyltransferase (248 aa).

Residues 1 to 21 (MLSILFIFGLILGSFYYTAGC) traverse the membrane as a helical segment. Residues Cys36, Cys39, Cys61, and Cys64 each coordinate Zn(2+). Transmembrane regions (helical) follow at residues 68–88 (ISFM…AAGI), 90–110 (FGIS…IIVA), 114–134 (IHFM…LAAA), 143–163 (WYAG…IAAI), 178–198 (VIGF…SVLI), and 223–243 (AIAA…SFYI).

The protein belongs to the peptidase A24 family. Zn(2+) is required as a cofactor.

It is found in the cell membrane. The catalysed reaction is Typically cleaves a -Gly-|-Phe- bond to release an N-terminal, basic peptide of 5-8 residues from type IV prepilin, and then N-methylates the new N-terminal amino group, the methyl donor being S-adenosyl-L-methionine.. Its function is as follows. Plays a role in type II pseudopili formation by proteolytically removing the leader sequence from substrate proteins and subsequently monomethylating the alpha-amino group of the newly exposed N-terminal phenylalanine. Substrates include proteins required for biogenesis of the type II general secretory apparatus. The chain is Prepilin leader peptidase/N-methyltransferase (comC) from Bacillus subtilis (strain 168).